Consider the following 246-residue polypeptide: D-erythrulose reductase (246 aa).

13–41 (LVTGAGKGIGRAVAVALCKAGARVTALSR) contacts NADP(+). Ser-138 is a substrate binding site. The Proton acceptor role is filled by Tyr-151. Lys-155 lines the NADP(+) pocket.

Belongs to the short-chain dehydrogenases/reductases (SDR) family. Homotetramer. Post-translationally, the N-terminus is blocked. In terms of tissue distribution, highly expressed in kidney, and also found in high amounts in liver and testis. Low expression seen in all other tissues tested.

The protein resides in the cytoplasm. It catalyses the reaction D-threitol + NADP(+) = D-erythrulose + NADPH + H(+). The enzyme catalyses xylitol + NADP(+) = L-xylulose + NADPH + H(+). Its function is as follows. Catalyzes the reduction of D-erythrulose to D-threitol with the concomitant oxidation of NAD(P)H to NAD(P)(+). NADH is less effective than NADPH. May also catalyze the reduction of L-xylulose. The chain is D-erythrulose reductase (DER) from Gallus gallus (Chicken).